A 177-amino-acid polypeptide reads, in one-letter code: NADH-quinone oxidoreductase subunit E (177 aa).

[2Fe-2S] cluster-binding residues include Cys93, Cys98, Cys134, and Cys138.

It belongs to the complex I 24 kDa subunit family. [2Fe-2S] cluster is required as a cofactor.

It carries out the reaction a quinone + NADH + 5 H(+)(in) = a quinol + NAD(+) + 4 H(+)(out). In terms of biological role, NDH-1 shuttles electrons from NADH, via FMN and iron-sulfur (Fe-S) centers, to quinones in the respiratory chain. Couples the redox reaction to proton translocation (for every two electrons transferred, four hydrogen ions are translocated across the cytoplasmic membrane), and thus conserves the redox energy in a proton gradient. The sequence is that of NADH-quinone oxidoreductase subunit E (nuoE) from Rickettsia prowazekii (strain Madrid E).